A 458-amino-acid polypeptide reads, in one-letter code: ATP synthase subunit beta (458 aa).

An ATP-binding site is contributed by 148–155 (GGAGVGKT).

Belongs to the ATPase alpha/beta chains family. As to quaternary structure, F-type ATPases have 2 components, CF(1) - the catalytic core - and CF(0) - the membrane proton channel. CF(1) has five subunits: alpha(3), beta(3), gamma(1), delta(1), epsilon(1). CF(0) has three main subunits: a(1), b(2) and c(9-12). The alpha and beta chains form an alternating ring which encloses part of the gamma chain. CF(1) is attached to CF(0) by a central stalk formed by the gamma and epsilon chains, while a peripheral stalk is formed by the delta and b chains.

The protein localises to the cell inner membrane. The catalysed reaction is ATP + H2O + 4 H(+)(in) = ADP + phosphate + 5 H(+)(out). In terms of biological role, produces ATP from ADP in the presence of a proton gradient across the membrane. The catalytic sites are hosted primarily by the beta subunits. The sequence is that of ATP synthase subunit beta from Francisella tularensis subsp. novicida (strain U112).